Consider the following 474-residue polypeptide: Synaptotagmin-17 (474 aa).

Residues 54–112 (PAQTPPWLVSNRSEDKEGDSDNTTSEPPATPQDTSPDRRRSSSDTSRSTYSLTRRISSL) form a disordered region. Positions 96-112 (SDTSRSTYSLTRRISSL) are enriched in low complexity. C2 domains lie at 184–310 (QLGM…HWWK) and 321–455 (ELGE…EQWH).

Belongs to the synaptotagmin family.

The protein resides in the membrane. In terms of biological role, may play a role in dendrite formation by melanocytes. This Xenopus tropicalis (Western clawed frog) protein is Synaptotagmin-17 (syt17).